A 160-amino-acid polypeptide reads, in one-letter code: Transcriptional repressor NrdR (160 aa).

Residues 1–11 show a composition bias toward polar residues; that stretch reads MRCPSCSSLDT. Residues 1–20 form a disordered region; sequence MRCPSCSSLDTQVKDSRPTE. A zinc finger spans residues 3-34; that stretch reads CPSCSSLDTQVKDSRPTEDSSVIRRRRVCLAC. Residues 49 to 139 enclose the ATP-cone domain; that stretch reads LTVIKRNGRR…VYRNFREAKD (91 aa).

Belongs to the NrdR family. Zn(2+) serves as cofactor.

Functionally, negatively regulates transcription of bacterial ribonucleotide reductase nrd genes and operons by binding to NrdR-boxes. The polypeptide is Transcriptional repressor NrdR (Rhodopseudomonas palustris (strain BisA53)).